The following is a 54-amino-acid chain: Potassium channel toxin alpha-KTx 14.2 (54 aa).

Positions 1–23 are cleaved as a signal peptide; that stretch reads MKIFFAILLILAVCSMAIWTVNG. Disulfide bonds link cysteine 30-cysteine 46, cysteine 36-cysteine 51, and cysteine 40-cysteine 53.

Belongs to the short scorpion toxin superfamily. Potassium channel inhibitor family. Alpha-KTx 14 subfamily. As to expression, expressed by the venom gland.

It localises to the secreted. Functionally, inhibits potassium channels. May be active towards small conductance calcium-activated potassium channels (KCNN, SK), and less active towards voltage-gated potassium channels (Kv/KCN). The polypeptide is Potassium channel toxin alpha-KTx 14.2 (Olivierus martensii (Manchurian scorpion)).